The chain runs to 217 residues: Large ribosomal subunit protein bL21m (217 aa).

Residues 61-81 (PPKVTTATTPEAPAAVPTSTP) are compositionally biased toward low complexity. The segment at 61 to 87 (PPKVTTATTPEAPAAVPTSTPFSQQPP) is disordered.

Belongs to the bacterial ribosomal protein bL21 family. As to quaternary structure, component of the mitochondrial large ribosomal subunit (mt-LSU). Mature N.crassa 74S mitochondrial ribosomes consist of a small (37S) and a large (54S) subunit. The 37S small subunit contains a 16S ribosomal RNA (16S mt-rRNA) and 32 different proteins. The 54S large subunit contains a 23S rRNA (23S mt-rRNA) and 42 different proteins.

The protein localises to the mitochondrion. Functionally, component of the mitochondrial ribosome (mitoribosome), a dedicated translation machinery responsible for the synthesis of mitochondrial genome-encoded proteins, including at least some of the essential transmembrane subunits of the mitochondrial respiratory chain. The mitoribosomes are attached to the mitochondrial inner membrane and translation products are cotranslationally integrated into the membrane. This chain is Large ribosomal subunit protein bL21m (mrpl49), found in Neurospora crassa (strain ATCC 24698 / 74-OR23-1A / CBS 708.71 / DSM 1257 / FGSC 987).